The primary structure comprises 346 residues: Probable RNA methyltransferase Pmen_2155 (346 aa).

Residue Glu-91 is the Proton acceptor of the active site. A Radical SAM core domain is found at 94–320; sequence LLPRDGLCIS…TKVRNSAGQD (227 aa). Cys-101 and Cys-325 form a disulfide bridge. The [4Fe-4S] cluster site is built by Cys-108, Cys-112, and Cys-115. Residues 153-154, Ser-183, 206-208, and Asn-282 each bind S-adenosyl-L-methionine; these read GE and SLH. Cys-325 serves as the catalytic S-methylcysteine intermediate.

This sequence belongs to the radical SAM superfamily. RlmN family. [4Fe-4S] cluster serves as cofactor.

It is found in the cytoplasm. In Ectopseudomonas mendocina (strain ymp) (Pseudomonas mendocina), this protein is Probable RNA methyltransferase Pmen_2155.